Consider the following 241-residue polypeptide: Triosephosphate isomerase (241 aa).

9 to 11 (NWK) is a binding site for substrate. The Electrophile role is filled by histidine 96. The active-site Proton acceptor is glutamate 165. Substrate is bound by residues glycine 171, serine 204, and 225–226 (GG).

This sequence belongs to the triosephosphate isomerase family. Homodimer.

Its subcellular location is the cytoplasm. It carries out the reaction D-glyceraldehyde 3-phosphate = dihydroxyacetone phosphate. It functions in the pathway carbohydrate biosynthesis; gluconeogenesis. The protein operates within carbohydrate degradation; glycolysis; D-glyceraldehyde 3-phosphate from glycerone phosphate: step 1/1. Functionally, involved in the gluconeogenesis. Catalyzes stereospecifically the conversion of dihydroxyacetone phosphate (DHAP) to D-glyceraldehyde-3-phosphate (G3P). In Trichormus variabilis (strain ATCC 29413 / PCC 7937) (Anabaena variabilis), this protein is Triosephosphate isomerase.